Consider the following 310-residue polypeptide: Sporozoite surface protein P36 (310 aa).

An N-terminal signal peptide occupies residues 1–24 (MRKALYSLLFYMCICLYIYTPVFM). 6-Cys domains lie at 25 to 157 (ANLK…IKKT) and 168 to 309 (YIKG…STKA). 6 disulfide bridges follow: Cys-38-Cys-48, Cys-62-Cys-137, Cys-80-Cys-135, Cys-172-Cys-196, Cys-210-Cys-291, and Cys-227-Cys-289. N-linked (GlcNAc...) asparagine glycans are attached at residues Asn-72, Asn-114, and Asn-118. Asn-290 carries N-linked (GlcNAc...) asparagine glycosylation.

It localises to the cell surface. It is found in the cell membrane. Its function is as follows. Involved in sporozoite infection of hepatocytes and replication therein. This Plasmodium yoelii yoelii protein is Sporozoite surface protein P36 (P36).